We begin with the raw amino-acid sequence, 247 residues long: DNA polymerase epsilon subunit D (247 aa).

Residues 128 to 247 form a disordered region; that stretch reads KKHKADKKVP…EGQNSSDDDS (120 aa). Residues 150–159 show a composition bias toward basic and acidic residues; sequence RLKDNDEQII. Composition is skewed to acidic residues over residues 165–188, 196–215, and 224–247; these read ADMEDDPEAEADEDITEELANDED, EEEEADEELDDEKDGEEVEE, and EEDELRGEEAADEDEGQNSSDDDS.

In terms of assembly, heterotetramer. Consists of four subunits: POL2, DPB2, DPB3 and DPB4.

Its subcellular location is the nucleus. Functionally, as accessory component of the DNA polymerase epsilon (DNA polymerase II) participates in chromosomal DNA replication. In Debaryomyces hansenii (strain ATCC 36239 / CBS 767 / BCRC 21394 / JCM 1990 / NBRC 0083 / IGC 2968) (Yeast), this protein is DNA polymerase epsilon subunit D (DPB4).